Reading from the N-terminus, the 175-residue chain is Ribosome maturation factor RimM (175 aa).

A PRC barrel domain is found at 99 to 172; the sequence is SIEFTWEHFI…KLTMIIPDGL (74 aa).

It belongs to the RimM family. Binds ribosomal protein uS19.

The protein localises to the cytoplasm. In terms of biological role, an accessory protein needed during the final step in the assembly of 30S ribosomal subunit, possibly for assembly of the head region. Essential for efficient processing of 16S rRNA. May be needed both before and after RbfA during the maturation of 16S rRNA. It has affinity for free ribosomal 30S subunits but not for 70S ribosomes. The chain is Ribosome maturation factor RimM from Porphyromonas gingivalis (strain ATCC BAA-308 / W83).